Consider the following 460-residue polypeptide: Bifunctional beta-D-glucosidase/beta-D-fucosidase (460 aa).

Catalysis depends on Glu-168, which acts as the Proton donor. The Nucleophile role is filled by Glu-362.

The protein belongs to the glycosyl hydrolase 1 family. In terms of assembly, monomer.

It localises to the secreted. The catalysed reaction is Hydrolysis of terminal, non-reducing beta-D-glucosyl residues with release of beta-D-glucose.. The enzyme catalyses Hydrolysis of terminal non-reducing beta-D-fucose residues in beta-D-fucosides.. With respect to regulation, inhibited by Cu(2+), Ag(+) and Hg(+), but not by other cations such as Mg(2+), Ca(2+), Mn(2+) and Co(2+). Inhibited by 1-amino-1-deoxy-D-glucose and p-chloromercuribenzoic acid, but not by EDTA or dithiothreitol. Inhibited by the disaccharides sucrose, lactose and cellobiose. The monosaccharides D-fructose, D-mannose, D-xylose and D-glucose increase the beta-D-fucosidase activity, but not the beta-D-glucosidase activity. D-glucose inhibits the beta-D-glucosidase activity, but promotes the beta-D-fucosidase activity. D-fucose inhibits the beta-D-glucosidase activity and does not significantly affect the beta-D-fucosidase activity. Bifunctional beta-D-glucosidase/beta-D-fucosidase. Activity towards pNP-beta-D-fucoside is about 80-85% of the activity towards pNP-beta-D-glucoside. Also has slight activity (less than 10%) towards pNP-beta-D-galactoside, and very low activity (less than 1%) towards pNP-beta-D-xyloside. Hydrolyzes laminaribiose, sophorose, cellobiose and gentobiose. Not active against maltose, pNP-alpha-D-glucoside or pNP-beta-L-fucoside. This is Bifunctional beta-D-glucosidase/beta-D-fucosidase from Bifidobacterium breve.